We begin with the raw amino-acid sequence, 180 residues long: UPF0227 protein VV2369 (180 aa).

It belongs to the UPF0227 family.

The protein is UPF0227 protein VV2369 of Vibrio vulnificus (strain YJ016).